A 250-amino-acid chain; its full sequence is 5-oxoprolinase subunit A (250 aa).

The protein belongs to the LamB/PxpA family. In terms of assembly, forms a complex composed of PxpA, PxpB and PxpC.

The catalysed reaction is 5-oxo-L-proline + ATP + 2 H2O = L-glutamate + ADP + phosphate + H(+). Catalyzes the cleavage of 5-oxoproline to form L-glutamate coupled to the hydrolysis of ATP to ADP and inorganic phosphate. The sequence is that of 5-oxoprolinase subunit A from Paraburkholderia xenovorans (strain LB400).